The primary structure comprises 177 residues: Large ribosomal subunit protein uL6 (177 aa).

The protein belongs to the universal ribosomal protein uL6 family. Part of the 50S ribosomal subunit.

In terms of biological role, this protein binds to the 23S rRNA, and is important in its secondary structure. It is located near the subunit interface in the base of the L7/L12 stalk, and near the tRNA binding site of the peptidyltransferase center. The polypeptide is Large ribosomal subunit protein uL6 (Rhodospirillum centenum (strain ATCC 51521 / SW)).